We begin with the raw amino-acid sequence, 264 residues long: Type III pantothenate kinase (264 aa).

Position 6–13 (6–13 (DIGNTQTV)) interacts with ATP. Substrate is bound by residues tyrosine 100 and 107–110 (GADR). The active-site Proton acceptor is aspartate 109. Aspartate 129 provides a ligand contact to K(+). Threonine 132 serves as a coordination point for ATP. Threonine 185 lines the substrate pocket.

It belongs to the type III pantothenate kinase family. As to quaternary structure, homodimer. NH4(+) is required as a cofactor. K(+) serves as cofactor.

The protein localises to the cytoplasm. It carries out the reaction (R)-pantothenate + ATP = (R)-4'-phosphopantothenate + ADP + H(+). Its pathway is cofactor biosynthesis; coenzyme A biosynthesis; CoA from (R)-pantothenate: step 1/5. Catalyzes the phosphorylation of pantothenate (Pan), the first step in CoA biosynthesis. This is Type III pantothenate kinase from Rubrobacter xylanophilus (strain DSM 9941 / JCM 11954 / NBRC 16129 / PRD-1).